The chain runs to 202 residues: Imidazole glycerol phosphate synthase subunit HisH (202 aa).

In terms of domain architecture, Glutamine amidotransferase type-1 spans 3–202; that stretch reads RIVILDYGLG…KILKNFVDMC (200 aa). The active-site Nucleophile is cysteine 79. Active-site residues include histidine 183 and glutamate 185.

As to quaternary structure, heterodimer of HisH and HisF.

The protein resides in the cytoplasm. It carries out the reaction 5-[(5-phospho-1-deoxy-D-ribulos-1-ylimino)methylamino]-1-(5-phospho-beta-D-ribosyl)imidazole-4-carboxamide + L-glutamine = D-erythro-1-(imidazol-4-yl)glycerol 3-phosphate + 5-amino-1-(5-phospho-beta-D-ribosyl)imidazole-4-carboxamide + L-glutamate + H(+). The enzyme catalyses L-glutamine + H2O = L-glutamate + NH4(+). It functions in the pathway amino-acid biosynthesis; L-histidine biosynthesis; L-histidine from 5-phospho-alpha-D-ribose 1-diphosphate: step 5/9. Its function is as follows. IGPS catalyzes the conversion of PRFAR and glutamine to IGP, AICAR and glutamate. The HisH subunit catalyzes the hydrolysis of glutamine to glutamate and ammonia as part of the synthesis of IGP and AICAR. The resulting ammonia molecule is channeled to the active site of HisF. This chain is Imidazole glycerol phosphate synthase subunit HisH, found in Methanosarcina barkeri (strain Fusaro / DSM 804).